The primary structure comprises 385 residues: Carbamoyl phosphate synthase small chain (385 aa).

The interval 1–196 (MEDALGQLAV…KLEKKKKFLF (196 aa)) is CPSase. L-glutamine-binding residues include Ser-51, Gly-245, and Gly-247. The region spanning 197–384 (HIVVYDFGVK…IKLLNQVKFS (188 aa)) is the Glutamine amidotransferase type-1 domain. Cys-273 acts as the Nucleophile in catalysis. Positions 274, 277, 315, and 318 each coordinate L-glutamine. Active-site residues include His-357 and Glu-359.

It belongs to the CarA family. Composed of two chains; the small (or glutamine) chain promotes the hydrolysis of glutamine to ammonia, which is used by the large (or ammonia) chain to synthesize carbamoyl phosphate. Tetramer of heterodimers (alpha,beta)4.

The catalysed reaction is hydrogencarbonate + L-glutamine + 2 ATP + H2O = carbamoyl phosphate + L-glutamate + 2 ADP + phosphate + 2 H(+). It carries out the reaction L-glutamine + H2O = L-glutamate + NH4(+). Its pathway is amino-acid biosynthesis; L-arginine biosynthesis; carbamoyl phosphate from bicarbonate: step 1/1. The protein operates within pyrimidine metabolism; UMP biosynthesis via de novo pathway; (S)-dihydroorotate from bicarbonate: step 1/3. Functionally, small subunit of the glutamine-dependent carbamoyl phosphate synthetase (CPSase). CPSase catalyzes the formation of carbamoyl phosphate from the ammonia moiety of glutamine, carbonate, and phosphate donated by ATP, constituting the first step of 2 biosynthetic pathways, one leading to arginine and/or urea and the other to pyrimidine nucleotides. The small subunit (glutamine amidotransferase) binds and cleaves glutamine to supply the large subunit with the substrate ammonia. This Buchnera aphidicola subsp. Schizaphis graminum (strain Sg) protein is Carbamoyl phosphate synthase small chain.